A 353-amino-acid chain; its full sequence is Nicotinate-nucleotide--dimethylbenzimidazole phosphoribosyltransferase (353 aa).

The active-site Proton acceptor is Glu-319.

The protein belongs to the CobT family.

It catalyses the reaction 5,6-dimethylbenzimidazole + nicotinate beta-D-ribonucleotide = alpha-ribazole 5'-phosphate + nicotinate + H(+). Its pathway is nucleoside biosynthesis; alpha-ribazole biosynthesis; alpha-ribazole from 5,6-dimethylbenzimidazole: step 1/2. Functionally, catalyzes the synthesis of alpha-ribazole-5'-phosphate from nicotinate mononucleotide (NAMN) and 5,6-dimethylbenzimidazole (DMB). The sequence is that of Nicotinate-nucleotide--dimethylbenzimidazole phosphoribosyltransferase from Chlorobaculum tepidum (strain ATCC 49652 / DSM 12025 / NBRC 103806 / TLS) (Chlorobium tepidum).